Reading from the N-terminus, the 367-residue chain is Selenoprotein Pa (367 aa).

Residues 1 to 19 (MWKALSLTLALCLLVGCSA) form the signal peptide. A non-standard amino acid (selenocysteine) is located at residue U59. N109 carries N-linked (GlcNAc...) asparagine glycosylation. Basic and acidic residues predominate over residues 191–220 (EVNKPVEEEPRQDHGHHEHGHHEHQGEAER). Residues 191 to 241 (EVNKPVEEEPRQDHGHHEHGHHEHQGEAERHRHGHHHPHHHHHHHRGQQQV) form a disordered region. The segment covering 221-237 (HRHGHHHPHHHHHHHRG) has biased composition (basic residues). 16 non-standard amino acids (selenocysteine) are found at residues U267, U273, U279, U290, U292, U294, U310, U320, U322, U336, U338, U346, U353, U355, U362, and U364. The segment at 309-367 (LUHCDEPLPASUPUQGLKEQDNHIKETUQURPAPPAEUELSQPTUVUPAGDATUGURKK) is disordered. The span at 326 to 336 (KEQDNHIKETU) shows a compositional bias: basic and acidic residues.

It belongs to the selenoprotein P family.

The protein localises to the secreted. Might be responsible for some of the extracellular antioxidant defense properties of selenium or might be involved in the transport of selenium. The chain is Selenoprotein Pa (sepp1a) from Danio rerio (Zebrafish).